Reading from the N-terminus, the 869-residue chain is Aminopeptidase N (869 aa).

Residues Glu122 and 262-266 (GAMEN) contribute to the substrate site. A Zn(2+)-binding site is contributed by His298. Glu299 functions as the Proton acceptor in the catalytic mechanism. Positions 302 and 321 each coordinate Zn(2+).

Belongs to the peptidase M1 family. Zn(2+) is required as a cofactor.

It is found in the cell inner membrane. The catalysed reaction is Release of an N-terminal amino acid, Xaa-|-Yaa- from a peptide, amide or arylamide. Xaa is preferably Ala, but may be most amino acids including Pro (slow action). When a terminal hydrophobic residue is followed by a prolyl residue, the two may be released as an intact Xaa-Pro dipeptide.. Aminopeptidase N is involved in the degradation of intracellular peptides generated by protein breakdown during normal growth as well as in response to nutrient starvation. This is Aminopeptidase N (pepN) from Haemophilus influenzae (strain ATCC 51907 / DSM 11121 / KW20 / Rd).